The sequence spans 106 residues: Urease subunit beta (106 aa).

Belongs to the urease beta subunit family. In terms of assembly, heterotrimer of UreA (gamma), UreB (beta) and UreC (alpha) subunits. Three heterotrimers associate to form the active enzyme.

It localises to the cytoplasm. The catalysed reaction is urea + 2 H2O + H(+) = hydrogencarbonate + 2 NH4(+). It functions in the pathway nitrogen metabolism; urea degradation; CO(2) and NH(3) from urea (urease route): step 1/1. The chain is Urease subunit beta from Acinetobacter baumannii (strain ATCC 17978 / DSM 105126 / CIP 53.77 / LMG 1025 / NCDC KC755 / 5377).